Here is a 1355-residue protein sequence, read N- to C-terminus: Ecdysone-induced protein 75B, isoform A (1355 aa).

4 disordered regions span residues 60 to 91 (QHQPMHQLHHQHQHQHQHQQQAKSQQLKQQHS), 126 to 228 (RLKN…DSSY), 248 to 268 (ELEQQQTTGGSNAQQQVEAKP), and 308 to 344 (ATQQQQQQQQQHQHQQQRRDSSDSNCSLMSNSSNSSA). Over residues 66-76 (QLHHQHQHQHQ) the composition is skewed to basic residues. 2 stretches are compositionally biased toward low complexity: residues 77 to 91 (HQQQAKSQQLKQQHS) and 143 to 179 (TLVKTTTTSNSNSNNTQTTNSISQQQQQHQIVLQHQQ). A compositionally biased stretch (acidic residues) spans 200-213 (SGIDEDSPNSDEDC). Composition is skewed to polar residues over residues 218–228 (PAGTSLEDSSY) and 254–264 (TTGGSNAQQQV). Composition is skewed to low complexity over residues 308–321 (ATQQQQQQQQQHQH) and 330–344 (DSNCSLMSNSSNSSA). Residues 384–474 (SQLNYLCQKF…VGMSRDAVRF (91 aa)) constitute a DNA-binding region (nuclear receptor). The segment at 387 to 421 (NYLCQKFDEKLDTALSNSSANTGRNTPAVTANEDA) adopts an NR C4-type; degenerate zinc-finger fold. An NR C4-type zinc finger spans residues 438 to 457 (CTKNQQCSILRINRNRCQYC). An NR LBD domain is found at 508–756 (DQPRLLAAVL…QQMWSMEDGN (249 aa)). 6 disordered regions span residues 780–821 (KSPL…SALA), 927–964 (LDSPTDSGIESGNEKNECKAVSSGGSSSCSSPRSSVDD), 987–1007 (VSVSPVRSPQPSTSSHLKRQI), 1051–1117 (AEAD…SSHS), 1147–1260 (ENST…SNSA), and 1312–1344 (TVTASNGGPPSAAASPAPSSSPPASVGSPNPGL). 5 stretches are compositionally biased toward low complexity: residues 797-809 (GSPSSSQPQGVSL), 948-960 (SSGGSSSCSSPRS), 987-1001 (VSVSPVRSPQPSTSS), 1053-1098 (ADAS…AQSQ), and 1106-1117 (SSPKASMASSHS). 2 stretches are compositionally biased toward polar residues: residues 1149 to 1162 (STAASSTTNGVGNR) and 1174 to 1196 (AVQNQQRWGSSSVITTTCQQRQQ). 3 stretches are compositionally biased toward low complexity: residues 1197–1233 (SVSPHSNGSSSSSSSSSSSSSSSSSTSSNCSSSSASS), 1242–1260 (STSNGTSAPASSSSGSNSA), and 1315–1343 (ASNGGPPSAAASPAPSSSPPASVGSPNPG).

This sequence belongs to the nuclear hormone receptor family. NR1 subfamily.

The protein resides in the nucleus. In terms of biological role, implicated in the regulation of ecdysone-triggered gene hierarchies. Probably plays a key role in mediating the regulation of the larval molt by 20-OH-ecdysone. The protein is Ecdysone-induced protein 75B, isoform A (Eip75B) of Drosophila melanogaster (Fruit fly).